The chain runs to 205 residues: Putative STAG3-like protein 1 (205 aa).

Residues 10–95 (PKVTCRDVLP…GRFKDWMVSM (86 aa)) enclose the SCD domain.

The protein belongs to the SCC3 family.

It localises to the nucleus. The chain is Putative STAG3-like protein 1 (STAG3L1) from Homo sapiens (Human).